We begin with the raw amino-acid sequence, 510 residues long: Peroxidase 2 (510 aa).

An N-terminal signal peptide occupies residues 1 to 19 (MRLTYLPLFAGIAIQSASA). Residues 20 to 58 (LPDFFKSSVLKPRRTNSLLINPDAQPDLPTAQQASTAAA) constitute a propeptide that is removed on maturation. Asp-228 functions as the Proton acceptor in the catalytic mechanism. His-362 serves as a coordination point for heme.

As to quaternary structure, homodimer. Heme b is required as a cofactor.

Its function is as follows. Peroxidase capable of degrading beta-carotene. This Mycetinis scorodonius (Garlic mushroom) protein is Peroxidase 2.